The following is a 301-amino-acid chain: Homoserine O-acetyltransferase (301 aa).

Catalysis depends on C142, which acts as the Acyl-thioester intermediate. Residues K163 and S192 each coordinate substrate. The active-site Proton acceptor is H235. Residue E237 is part of the active site. R249 contacts substrate.

The protein belongs to the MetA family.

It is found in the cytoplasm. It catalyses the reaction L-homoserine + acetyl-CoA = O-acetyl-L-homoserine + CoA. Its pathway is amino-acid biosynthesis; L-methionine biosynthesis via de novo pathway; O-acetyl-L-homoserine from L-homoserine: step 1/1. In terms of biological role, transfers an acetyl group from acetyl-CoA to L-homoserine, forming acetyl-L-homoserine. The protein is Homoserine O-acetyltransferase of Bacillus cereus (strain ATCC 14579 / DSM 31 / CCUG 7414 / JCM 2152 / NBRC 15305 / NCIMB 9373 / NCTC 2599 / NRRL B-3711).